We begin with the raw amino-acid sequence, 130 residues long: Small ribosomal subunit protein uS9 (130 aa).

Belongs to the universal ribosomal protein uS9 family.

This Streptococcus equi subsp. zooepidemicus (strain H70) protein is Small ribosomal subunit protein uS9.